Reading from the N-terminus, the 195-residue chain is IMP cyclohydrolase (195 aa).

This sequence belongs to the archaeal IMP cyclohydrolase family.

The catalysed reaction is IMP + H2O = 5-formamido-1-(5-phospho-D-ribosyl)imidazole-4-carboxamide. Its pathway is purine metabolism; IMP biosynthesis via de novo pathway; IMP from 5-formamido-1-(5-phospho-D-ribosyl)imidazole-4-carboxamide: step 1/1. In terms of biological role, catalyzes the cyclization of 5-formylamidoimidazole-4-carboxamide ribonucleotide to IMP. This Haloquadratum walsbyi (strain DSM 16790 / HBSQ001) protein is IMP cyclohydrolase.